The following is a 474-amino-acid chain: UDP-N-acetylmuramate--L-alanine ligase (474 aa).

119-125 (GTHGKTT) is an ATP binding site.

Belongs to the MurCDEF family.

The protein localises to the cytoplasm. The enzyme catalyses UDP-N-acetyl-alpha-D-muramate + L-alanine + ATP = UDP-N-acetyl-alpha-D-muramoyl-L-alanine + ADP + phosphate + H(+). Its pathway is cell wall biogenesis; peptidoglycan biosynthesis. In terms of biological role, cell wall formation. This is UDP-N-acetylmuramate--L-alanine ligase from Jannaschia sp. (strain CCS1).